The primary structure comprises 270 residues: Hydroxyethylthiazole kinase (270 aa).

A substrate-binding site is contributed by Met-47. Positions 123 and 169 each coordinate ATP. Gly-196 is a binding site for substrate.

This sequence belongs to the Thz kinase family. Mg(2+) is required as a cofactor.

The catalysed reaction is 5-(2-hydroxyethyl)-4-methylthiazole + ATP = 4-methyl-5-(2-phosphooxyethyl)-thiazole + ADP + H(+). Its pathway is cofactor biosynthesis; thiamine diphosphate biosynthesis; 4-methyl-5-(2-phosphoethyl)-thiazole from 5-(2-hydroxyethyl)-4-methylthiazole: step 1/1. Catalyzes the phosphorylation of the hydroxyl group of 4-methyl-5-beta-hydroxyethylthiazole (THZ). The protein is Hydroxyethylthiazole kinase of Roseiflexus castenholzii (strain DSM 13941 / HLO8).